Consider the following 197-residue polypeptide: Inner membrane-spanning protein YciB (197 aa).

Helical transmembrane passes span 36 to 56 (IYSATAMLIISSLVVYGALFL), 64 to 84 (GQWLTLIACLVFGGLTLTFHS), 90 to 110 (WKAPVVNWLFALGFAGSHFIG), 135 to 155 (LAWIAFFLFCGAANLFVAFTF), and 162 to 182 (FKVFGSLGMTVIFLVAQGVYL).

It belongs to the YciB family.

The protein localises to the cell inner membrane. Plays a role in cell envelope biogenesis, maintenance of cell envelope integrity and membrane homeostasis. In Pseudomonas putida (strain ATCC 700007 / DSM 6899 / JCM 31910 / BCRC 17059 / LMG 24140 / F1), this protein is Inner membrane-spanning protein YciB.